The following is a 327-amino-acid chain: DNA-directed RNA polymerase subunit alpha (327 aa).

The segment at 1-242 (MRKFLKYQLD…AHLEPIVNID (242 aa)) is alpha N-terminal domain (alpha-NTD). The alpha C-terminal domain (alpha-CTD) stretch occupies residues 259–327 (KRQNASISID…TERSLELKKD (69 aa)).

The protein belongs to the RNA polymerase alpha chain family. In terms of assembly, homodimer. The RNAP catalytic core consists of 2 alpha, 1 beta, 1 beta' and 1 omega subunit. When a sigma factor is associated with the core the holoenzyme is formed, which can initiate transcription.

It carries out the reaction RNA(n) + a ribonucleoside 5'-triphosphate = RNA(n+1) + diphosphate. Its function is as follows. DNA-dependent RNA polymerase catalyzes the transcription of DNA into RNA using the four ribonucleoside triphosphates as substrates. The polypeptide is DNA-directed RNA polymerase subunit alpha (Ureaplasma parvum serovar 3 (strain ATCC 700970)).